The primary structure comprises 345 residues: D-fructose 1,6-bisphosphatase class 2/sedoheptulose 1,7-bisphosphatase (345 aa).

Mn(2+) contacts are provided by aspartate 33, glutamate 57, aspartate 97, and glutamate 100. Residues 100–102, tyrosine 131, 176–178, and 198–200 each bind substrate; these read EGT, RPR, and DGD. Position 225 (glutamate 225) interacts with Mn(2+).

The protein belongs to the FBPase class 2 family. Homotetramer. It depends on Mn(2+) as a cofactor.

The catalysed reaction is beta-D-fructose 1,6-bisphosphate + H2O = beta-D-fructose 6-phosphate + phosphate. The enzyme catalyses D-sedoheptulose 1,7-bisphosphate + H2O = D-sedoheptulose 7-phosphate + phosphate. Its pathway is carbohydrate biosynthesis; Calvin cycle. Functionally, catalyzes the hydrolysis of fructose 1,6-bisphosphate (Fru 1,6-P2) and sedoheptulose 1,7-bisphosphate (Sed 1,7-P2) to fructose 6-phosphate and sedoheptulose 7-phosphate, respectively. The sequence is that of D-fructose 1,6-bisphosphatase class 2/sedoheptulose 1,7-bisphosphatase from Microcystis aeruginosa (strain NIES-843 / IAM M-2473).